A 359-amino-acid chain; its full sequence is Mandelate racemase (359 aa).

The Proton acceptor; specific for S-mandelate role is filled by Lys166. Positions 195, 221, and 247 each coordinate Mg(2+). Residue His297 is the Proton acceptor; specific for R-mandelate of the active site. Residue Glu317 participates in substrate binding.

The protein belongs to the mandelate racemase/muconate lactonizing enzyme family. Homooctamer. Mg(2+) is required as a cofactor.

It carries out the reaction (S)-mandelate = (R)-mandelate. It functions in the pathway aromatic compound metabolism; (R)-mandelate degradation; benzoate from (R)-mandelate: step 1/4. In Pseudomonas putida (Arthrobacter siderocapsulatus), this protein is Mandelate racemase (mdlA).